The sequence spans 565 residues: NAD-dependent malic enzyme (565 aa).

Catalysis depends on Tyr104, which acts as the Proton donor. Arg157 is an NAD(+) binding site. The Proton acceptor role is filled by Lys175. Positions 246, 247, and 270 each coordinate a divalent metal cation. The NAD(+) site is built by Asp270 and Asn418.

This sequence belongs to the malic enzymes family. Homotetramer. Requires Mg(2+) as cofactor. It depends on Mn(2+) as a cofactor.

It catalyses the reaction (S)-malate + NAD(+) = pyruvate + CO2 + NADH. The enzyme catalyses oxaloacetate + H(+) = pyruvate + CO2. The chain is NAD-dependent malic enzyme from Shigella sonnei (strain Ss046).